Consider the following 188-residue polypeptide: Elongation factor P (188 aa).

This sequence belongs to the elongation factor P family.

Its subcellular location is the cytoplasm. The protein operates within protein biosynthesis; polypeptide chain elongation. Involved in peptide bond synthesis. Stimulates efficient translation and peptide-bond synthesis on native or reconstituted 70S ribosomes in vitro. Probably functions indirectly by altering the affinity of the ribosome for aminoacyl-tRNA, thus increasing their reactivity as acceptors for peptidyl transferase. This chain is Elongation factor P, found in Mycoplasma mobile (strain ATCC 43663 / 163K / NCTC 11711) (Mesomycoplasma mobile).